The sequence spans 315 residues: MGARLGRRAGPEAGSEAGAAAGCGPAPYERRVRWLREIQSTLRERRPERARQLLRLLRQDLGLERTLLPDILYRDVAFLNPVDPISHDLLVNLARDLQCPKKDYELWKSSDKICRQLIYHLTPHSKQQQGSSLRQRKTQSCLKSSLQKTLLAGETVDLSGIPLSTQDVQHITRYLSSHGAVLAVLDLSFTGLSDELLHLLLPSLWALPRLTQLLLNGNRLTRATARKLTDAIKDTTKFPALAWVDLGNNVDVASLPQPLLVGLRRRLSQRTSLPTIYEGLDLEPEGSAAGATTPASTWDSTAAGLGPEPQACCAR.

The segment at 1 to 23 (MGARLGRRAGPEAGSEAGAAAGC) is disordered. A compositionally biased stretch (low complexity) spans 11–23 (PEAGSEAGAAAGC). 2 LRR repeats span residues 182–195 (LAVL…LSDE) and 207–220 (LPRL…GNRL). Positions 284–315 (PEGSAAGATTPASTWDSTAAGLGPEPQACCAR) are disordered. A compositionally biased stretch (low complexity) spans 286 to 297 (GSAAGATTPAST).

This sequence belongs to the LRRC75 family.

Its function is as follows. May suppress myogenic differentiation by modulating MYOG expression and Erk1/2 signaling. The polypeptide is Leucine-rich repeat-containing protein 75B (Homo sapiens (Human)).